The chain runs to 120 residues: Large ribosomal subunit protein bL19 (120 aa).

It belongs to the bacterial ribosomal protein bL19 family.

This protein is located at the 30S-50S ribosomal subunit interface and may play a role in the structure and function of the aminoacyl-tRNA binding site. In Picosynechococcus sp. (strain ATCC 27264 / PCC 7002 / PR-6) (Agmenellum quadruplicatum), this protein is Large ribosomal subunit protein bL19.